Consider the following 192-residue polypeptide: Elongation factor P (192 aa).

N6-(3,6-diaminohexanoyl)-5-hydroxylysine is present on Lys-37.

The protein belongs to the elongation factor P family. In terms of processing, may be beta-lysylated on the epsilon-amino group of Lys-37 by the combined action of EpmA and EpmB, and then hydroxylated on the C5 position of the same residue by EpmC (if this protein is present). Lysylation is critical for the stimulatory effect of EF-P on peptide-bond formation. The lysylation moiety may extend toward the peptidyltransferase center and stabilize the terminal 3-CCA end of the tRNA. Hydroxylation of the C5 position on Lys-37 may allow additional potential stabilizing hydrogen-bond interactions with the P-tRNA.

It localises to the cytoplasm. It participates in protein biosynthesis; polypeptide chain elongation. Functionally, involved in peptide bond synthesis. Alleviates ribosome stalling that occurs when 3 or more consecutive Pro residues or the sequence PPG is present in a protein, possibly by augmenting the peptidyl transferase activity of the ribosome. Modification of Lys-37 is required for alleviation. This Acinetobacter baylyi (strain ATCC 33305 / BD413 / ADP1) protein is Elongation factor P.